Consider the following 125-residue polypeptide: Small ribosomal subunit protein uS13 (125 aa).

Residues 92-125 (RHRRGLPVRGQRTRTNARTRKGKKKTVGAQAKKK) are disordered.

Belongs to the universal ribosomal protein uS13 family. Part of the 30S ribosomal subunit. Forms a loose heterodimer with protein S19. Forms two bridges to the 50S subunit in the 70S ribosome.

Functionally, located at the top of the head of the 30S subunit, it contacts several helices of the 16S rRNA. In the 70S ribosome it contacts the 23S rRNA (bridge B1a) and protein L5 of the 50S subunit (bridge B1b), connecting the 2 subunits; these bridges are implicated in subunit movement. Contacts the tRNAs in the A and P-sites. The protein is Small ribosomal subunit protein uS13 of Akkermansia muciniphila (strain ATCC BAA-835 / DSM 22959 / JCM 33894 / BCRC 81048 / CCUG 64013 / CIP 107961 / Muc).